The sequence spans 205 residues: Inactive ribonuclease-like protein 9 (205 aa).

An N-terminal signal peptide occupies residues 1–24 (MMLITTHSLPLLLLLLQLWQPLQF). 3 cysteine pairs are disulfide-bonded: Cys-97–Cys-152, Cys-115–Cys-167, and Cys-122–Cys-129. Asn-130 and Asn-142 each carry an N-linked (GlcNAc...) asparagine glycan.

This sequence belongs to the pancreatic ribonuclease family.

Its subcellular location is the secreted. Its function is as follows. Does not exhibit any ribonuclease activity. The sequence is that of Inactive ribonuclease-like protein 9 (RNASE9) from Cebus albifrons (White-fronted capuchin).